The chain runs to 261 residues: Hemin import ATP-binding protein HmuV (261 aa).

One can recognise an ABC transporter domain in the interval 5 to 241; that stretch reads YTAENLTFTR…DALAHWYGAQ (237 aa). 37–44 provides a ligand contact to ATP; it reads GPNGAGKS.

Belongs to the ABC transporter superfamily. Heme (hemin) importer (TC 3.A.1.14.5) family. In terms of assembly, the complex is composed of two ATP-binding proteins (HmuV), two transmembrane proteins (HmuU) and a solute-binding protein (HmuT).

It is found in the cell inner membrane. Part of the ABC transporter complex HmuTUV involved in hemin import. Responsible for energy coupling to the transport system. The protein is Hemin import ATP-binding protein HmuV of Enterobacter cloacae.